We begin with the raw amino-acid sequence, 105 residues long: Pyrimidine/purine nucleoside phosphorylase (105 aa).

Belongs to the nucleoside phosphorylase PpnP family.

It catalyses the reaction a purine D-ribonucleoside + phosphate = a purine nucleobase + alpha-D-ribose 1-phosphate. The enzyme catalyses adenosine + phosphate = alpha-D-ribose 1-phosphate + adenine. It carries out the reaction cytidine + phosphate = cytosine + alpha-D-ribose 1-phosphate. The catalysed reaction is guanosine + phosphate = alpha-D-ribose 1-phosphate + guanine. It catalyses the reaction inosine + phosphate = alpha-D-ribose 1-phosphate + hypoxanthine. The enzyme catalyses thymidine + phosphate = 2-deoxy-alpha-D-ribose 1-phosphate + thymine. It carries out the reaction uridine + phosphate = alpha-D-ribose 1-phosphate + uracil. The catalysed reaction is xanthosine + phosphate = alpha-D-ribose 1-phosphate + xanthine. Its function is as follows. Catalyzes the phosphorolysis of diverse nucleosides, yielding D-ribose 1-phosphate and the respective free bases. Can use uridine, adenosine, guanosine, cytidine, thymidine, inosine and xanthosine as substrates. Also catalyzes the reverse reactions. This is Pyrimidine/purine nucleoside phosphorylase from Paracidovorax citrulli (strain AAC00-1) (Acidovorax citrulli).